The primary structure comprises 317 residues: Melanocyte-stimulating hormone receptor (317 aa).

Topologically, residues 1–37 are extracellular; it reads MPMQGAQKRLLGSLNSTPTATPNLGLAANHTGAPCLE. N29 carries an N-linked (GlcNAc...) asparagine glycan. A helical transmembrane segment spans residues 38-63; the sequence is VSIPDGLFLSLGLVSLVENVLVVAAI. Residues 64–72 lie on the Cytoplasmic side of the membrane; sequence AKNRNLHSP. A helical transmembrane segment spans residues 73–93; that stretch reads MYCFICCLALSDLLVSSSNML. The Extracellular portion of the chain corresponds to 94 to 118; it reads ETAVILLLEAGALATRASVVQQLQN. A helical membrane pass occupies residues 119–140; sequence TIDVLTCSSMLCSLCFLGAIAV. Residues 141–163 are Cytoplasmic-facing; the sequence is DRHVSIFYALRYHSIMTLARARR. The helical transmembrane segment at 164 to 183 threads the bilayer; it reads AIAAIWVASVLSSTLFIAYC. The Extracellular segment spans residues 184–191; the sequence is DHAXVLLC. The helical transmembrane segment at 192-211 threads the bilayer; that stretch reads LVVFFLAMLVLMAVLYVHML. At 212 to 240 the chain is on the cytoplasmic side; that stretch reads ARACQHAQGITRLHQRQPPAHQGFGFRGA. The helical transmembrane segment at 241–266 threads the bilayer; the sequence is ATLTILLGIFFLCWGPFFLHLTLVVL. Residues 267–279 are Extracellular-facing; sequence CPQHLTCSCIFKN. Residues 280–300 traverse the membrane as a helical segment; that stretch reads FKVFLTLIICSTIIDPLIYAF. Topologically, residues 301-317 are cytoplasmic; the sequence is RSQELRRTLKELLLCSW. Residue C315 is the site of S-palmitoyl cysteine attachment.

Belongs to the G-protein coupled receptor 1 family. As to quaternary structure, interacts with MGRN1, but does not undergo MGRN1-mediated ubiquitination; this interaction competes with GNAS-binding and thus inhibits agonist-induced cAMP production. Interacts with OPN3; the interaction results in a decrease in MC1R-mediated cAMP signaling and ultimately a decrease in melanin production in melanocytes.

The protein resides in the cell membrane. Receptor for MSH (alpha, beta and gamma) and ACTH. The activity of this receptor is mediated by G proteins which activate adenylate cyclase. Mediates melanogenesis, the production of eumelanin (black/brown) and phaeomelanin (red/yellow), via regulation of cAMP signaling in melanocytes. The chain is Melanocyte-stimulating hormone receptor (MC1R) from Ateles paniscus (Black spider monkey).